Here is a 225-residue protein sequence, read N- to C-terminus: 7-cyano-7-deazaguanine synthase (225 aa).

ATP is bound at residue 8-18; the sequence is VSGGADSATVL. Zn(2+)-binding residues include Cys-188, Cys-198, Cys-201, and Cys-204.

It belongs to the QueC family. Zn(2+) is required as a cofactor.

The catalysed reaction is 7-carboxy-7-deazaguanine + NH4(+) + ATP = 7-cyano-7-deazaguanine + ADP + phosphate + H2O + H(+). The protein operates within purine metabolism; 7-cyano-7-deazaguanine biosynthesis. Catalyzes the ATP-dependent conversion of 7-carboxy-7-deazaguanine (CDG) to 7-cyano-7-deazaguanine (preQ(0)). This Rickettsia bellii (strain OSU 85-389) protein is 7-cyano-7-deazaguanine synthase.